Here is a 207-residue protein sequence, read N- to C-terminus: MKATTIIGIAGGSGSGKTTVTNEIMKNLEGHSVALLAQDYYYKDQKHLTFDERLETNYDHPFAFDNDLLIENLKDLKNGKAVEVPTYDYASHTRSDITIDFKPKDVIIVEGIFALENKVLRDMMDVKIYVDTDADLRILRRLTRDTKERGRSMDSVINQYLSVVRPMHDQFIEPTKKYADIIIPEGGSNKVAIDIMTTKIQSLVSKQ.

11–18 serves as a coordination point for ATP; the sequence is GGSGSGKT.

The protein belongs to the uridine kinase family.

The protein localises to the cytoplasm. The enzyme catalyses uridine + ATP = UMP + ADP + H(+). The catalysed reaction is cytidine + ATP = CMP + ADP + H(+). It functions in the pathway pyrimidine metabolism; CTP biosynthesis via salvage pathway; CTP from cytidine: step 1/3. The protein operates within pyrimidine metabolism; UMP biosynthesis via salvage pathway; UMP from uridine: step 1/1. The chain is Uridine kinase from Staphylococcus aureus (strain Mu3 / ATCC 700698).